The following is a 443-amino-acid chain: Intermediate filament protein ifd-2 (443 aa).

Positions 1–58 (MTDPLNPTRLQNHPALARIIESGRTNLPTGITTSGALSAYAQNAAAIIRDNREREKVE) are head. The IF rod domain maps to 55–405 (EKVEIADLNN…KLMENAEHLR (351 aa)). The segment at 59–90 (IADLNNRLARYVEKVRFLEAQNRVLENDIGVF) is coil 1A. Positions 91 to 104 (RNAAHTHSERIAVY) are linker 1. Positions 105–239 (FESEKASLFT…SQHDIAIREE (135 aa)) are coil 1B. The segment at 240-257 (ISKARRDTTNKNRDYFHN) is linker 12. The coil 2 stretch occupies residues 258–403 (ELHAAMKEIR…YRKLMENAEH (146 aa)). The tract at residues 404–443 (LRTTVQTHVTYNAPPPPLPQSGPRTTSYHAYGSAYNDSLL) is tail.

Belongs to the intermediate filament family.

The protein localises to the cytoplasm. Its function is as follows. Cytoplasmic intermediate filaments provide mechanical strength to cells. Not essential protein. This Caenorhabditis elegans protein is Intermediate filament protein ifd-2 (ifd-2).